Consider the following 165-residue polypeptide: Putative tyrosine-protein phosphatase AMV078 (165 aa).

The 148-residue stretch at Asn2–Ile149 folds into the Tyrosine-protein phosphatase domain. Cys94 functions as the Phosphocysteine intermediate in the catalytic mechanism.

This sequence belongs to the protein-tyrosine phosphatase family. Non-receptor class dual specificity subfamily.

The enzyme catalyses O-phospho-L-tyrosyl-[protein] + H2O = L-tyrosyl-[protein] + phosphate. The sequence is that of Putative tyrosine-protein phosphatase AMV078 from Amsacta moorei entomopoxvirus (AmEPV).